The sequence spans 140 residues: Aspartate 1-decarboxylase (140 aa).

The active-site Schiff-base intermediate with substrate; via pyruvic acid is the S25. Pyruvic acid (Ser) is present on S25. T57 is a substrate binding site. The Proton donor role is filled by Y58. 73–75 lines the substrate pocket; the sequence is GAA.

This sequence belongs to the PanD family. As to quaternary structure, heterooctamer of four alpha and four beta subunits. The cofactor is pyruvate. Post-translationally, is synthesized initially as an inactive proenzyme, which is activated by self-cleavage at a specific serine bond to produce a beta-subunit with a hydroxyl group at its C-terminus and an alpha-subunit with a pyruvoyl group at its N-terminus.

The protein resides in the cytoplasm. The enzyme catalyses L-aspartate + H(+) = beta-alanine + CO2. It participates in cofactor biosynthesis; (R)-pantothenate biosynthesis; beta-alanine from L-aspartate: step 1/1. Its function is as follows. Catalyzes the pyruvoyl-dependent decarboxylation of aspartate to produce beta-alanine. This is Aspartate 1-decarboxylase from Persephonella marina (strain DSM 14350 / EX-H1).